A 330-amino-acid polypeptide reads, in one-letter code: ADP-L-glycero-D-manno-heptose-6-epimerase (330 aa).

Residues Phe-10–Ile-11, Asp-31–Asp-32, Lys-38, Lys-53, Gln-74–Ser-78, and Asn-91 each bind NADP(+). The Proton acceptor role is filled by Tyr-138. Lys-142 contacts NADP(+). Asn-167 contributes to the substrate binding site. 2 residues coordinate NADP(+): Val-168 and Lys-176. Lys-176 functions as the Proton acceptor in the catalytic mechanism. Substrate is bound by residues Arg-178, His-185, Phe-199–Trp-202, Arg-212, and Tyr-291.

This sequence belongs to the NAD(P)-dependent epimerase/dehydratase family. HldD subfamily. As to quaternary structure, homopentamer. NADP(+) is required as a cofactor.

It catalyses the reaction ADP-D-glycero-beta-D-manno-heptose = ADP-L-glycero-beta-D-manno-heptose. It participates in nucleotide-sugar biosynthesis; ADP-L-glycero-beta-D-manno-heptose biosynthesis; ADP-L-glycero-beta-D-manno-heptose from D-glycero-beta-D-manno-heptose 7-phosphate: step 4/4. Catalyzes the interconversion between ADP-D-glycero-beta-D-manno-heptose and ADP-L-glycero-beta-D-manno-heptose via an epimerization at carbon 6 of the heptose. The chain is ADP-L-glycero-D-manno-heptose-6-epimerase from Bordetella petrii (strain ATCC BAA-461 / DSM 12804 / CCUG 43448).